The primary structure comprises 288 residues: Structure-specific endonuclease subunit SLX1 (288 aa).

The GIY-YIG domain occupies 10-93 (DFYCSYLLRS…QHSYKTRFIE (84 aa)). The SLX1-type zinc finger occupies 209 to 265 (CMICDKKIDYIHDEGTQMVGFCSDDECDFLSCLSCLYKEFTKNSKQIIPKSGHCPNC).

Belongs to the SLX1 family. Forms a heterodimer with SLX4. It depends on a divalent metal cation as a cofactor.

It is found in the nucleus. In terms of biological role, catalytic subunit of the SLX1-SLX4 structure-specific endonuclease that resolves DNA secondary structures generated during DNA repair and recombination. Has endonuclease activity towards branched DNA substrates, introducing single-strand cuts in duplex DNA close to junctions with ss-DNA. The protein is Structure-specific endonuclease subunit SLX1 of Kluyveromyces lactis (strain ATCC 8585 / CBS 2359 / DSM 70799 / NBRC 1267 / NRRL Y-1140 / WM37) (Yeast).